Reading from the N-terminus, the 37-residue chain is Large ribosomal subunit protein bL36c (37 aa).

It belongs to the bacterial ribosomal protein bL36 family.

It localises to the plastid. Its subcellular location is the chloroplast. The protein is Large ribosomal subunit protein bL36c of Piper cenocladum (Ant piper).